A 535-amino-acid chain; its full sequence is Probable bifunctional tRNA threonylcarbamoyladenosine biosynthesis protein (535 aa).

Residues 1-323 (MICLGLEGTA…YRTDMVEVNW (323 aa)) are kae1. H106, H110, and Y127 together coordinate Fe cation. L-threonylcarbamoyladenylate-binding positions include 127-131 (YVSGG), D159, G172, E176, and N256. D284 is a binding site for Fe cation. In terms of domain architecture, Protein kinase spans 333-535 (KIPEHLIGKG…DVERRARYVE (203 aa)). ATP is bound by residues 339–347 (IGKGAEADI) and K360. D451 acts as the Proton acceptor; for kinase activity in catalysis.

The protein in the N-terminal section; belongs to the KAE1 / TsaD family. In the C-terminal section; belongs to the protein kinase superfamily. Tyr protein kinase family. BUD32 subfamily. Component of the KEOPS complex that consists of Kae1, Bud32, Cgi121 and Pcc1; the whole complex dimerizes. Requires Fe(2+) as cofactor.

The protein localises to the cytoplasm. It carries out the reaction L-seryl-[protein] + ATP = O-phospho-L-seryl-[protein] + ADP + H(+). The enzyme catalyses L-threonyl-[protein] + ATP = O-phospho-L-threonyl-[protein] + ADP + H(+). It catalyses the reaction L-threonylcarbamoyladenylate + adenosine(37) in tRNA = N(6)-L-threonylcarbamoyladenosine(37) in tRNA + AMP + H(+). Activity provided by the Kae1 region seems to be regulated via phosphorylation by the protein kinase Bud32, which is itself activated by Cgi121. Its function is as follows. Required for the formation of a threonylcarbamoyl group on adenosine at position 37 (t(6)A37) in tRNAs that read codons beginning with adenine. Is a component of the KEOPS complex that is probably involved in the transfer of the threonylcarbamoyl moiety of threonylcarbamoyl-AMP (TC-AMP) to the N6 group of A37. The Kae1 domain likely plays a direct catalytic role in this reaction. The Bud32 domain probably displays kinase activity that regulates Kae1 function. In vitro, exhibits low ATPase activity, but does not bind DNA and does not have endonuclease activity. The protein is Probable bifunctional tRNA threonylcarbamoyladenosine biosynthesis protein of Methanocaldococcus jannaschii (strain ATCC 43067 / DSM 2661 / JAL-1 / JCM 10045 / NBRC 100440) (Methanococcus jannaschii).